A 165-amino-acid polypeptide reads, in one-letter code: uncharacterized protein (165 aa).

The tract at residues 28-97 (EASAPSGNPP…QLSQSLEVPT (70 aa)) is disordered. Residues 34 to 47 (GNPPPPPPPPPPPI) are compositionally biased toward pro residues. Polar residues-rich tracts occupy residues 54–66 (KSLN…QLDN) and 73–94 (AQHT…QSLE).

This is an uncharacterized protein from Rickettsia prowazekii (strain Madrid E).